The chain runs to 548 residues: Mercuric reductase (548 aa).

The region spanning 1–65 (MTEITVNGMT…AIAALGYQGS (65 aa)) is the HMA domain. The a metal cation site is built by Cys11 and Cys14. Positions 97, 117, and 122 each coordinate FAD. A disulfide bond links Cys123 and Cys128. Residues Lys132, Ala198, Asp390, and Val398 each coordinate FAD. Residues Cys545 and Cys546 each coordinate Hg(2+).

It belongs to the class-I pyridine nucleotide-disulfide oxidoreductase family. Homodimer. The cofactor is FAD.

The catalysed reaction is Hg + NADP(+) + H(+) = Hg(2+) + NADPH. Its function is as follows. Resistance to Hg(2+) in bacteria appears to be governed by a specialized system which includes mercuric reductase. MerA protein is responsible for volatilizing mercury as Hg(0). In Pseudomonas fluorescens, this protein is Mercuric reductase (merA).